Reading from the N-terminus, the 1641-residue chain is Ophiophagus venom factor (1641 aa).

Residues M1–G22 form the signal peptide. Residues N181 and N209 are each glycosylated (N-linked (GlcNAc...) asparagine). P507, D530, V531, and D533 together coordinate Mg(2+). 12 cysteine pairs are disulfide-bonded: C535–C796, C604–C639, C672–C699, C673–C706, C686–C707, C852–C1491, C1336–C1467, C1367–C1436, C1484–C1489, C1496–C1568, C1515–C1639, and C1615–C1624. A propeptide spanning residues R645–N728 is cleaved from the precursor. The tract at residues S649–R727 is C3a-like domain. Residues C672 to C707 enclose the Anaphylatoxin-like domain. A factor B binding site region spans residues E731 to P742. A propeptide spanning residues H981 to Y1259 is cleaved from the precursor. Positions H981 to Y1259 are C3d-like domain. Residues C989–Q992 constitute a cross-link (isoglutamyl cysteine thioester (Cys-Gln)). Residues V1186–T1249 form a factor H binding site region. The NTR domain occupies C1496 to C1639.

This sequence belongs to the venom complement C3 homolog family. In terms of assembly, heterotrimer of alpha, beta and gamma chains; disulfide-linked. May be active with factor B in the presence of factor D. In terms of processing, first processed by the removal of 4 Arg residues by furin-type protease, forming two chains, alpha and gamma/beta precursor, linked by a disulfide bond. Probably, a cobrin-like protease cleaves the C3a-like domain and then the C3d-like domain, generating the mature venom factor (OVF). The beta chain is not glycosylated. In terms of tissue distribution, expressed by the venom gland.

The protein localises to the secreted. In terms of biological role, complement-activating protein in cobra venom. It is a structural and functional analog of complement component C3b, the activated form of C3. It binds factor B (CFB), which is subsequently cleaved by factor D (CFD) to form the bimolecular complex OVF/Bb. OVF/Bb is a C3/C5 convertase that cleaves both complement components C3 and C5. Structurally, it resembles the C3b degradation product C3c, which is not able to form a C3/C5 convertase. Unlike C3b/Bb, OVF/Bb is a stable complex and completely resistant to the actions of complement regulatory factors H (CFH) and I (CFI). Therefore, OVF continuously activates complement. As a result, OVF exhibits complement-depleting activity. The sequence is that of Ophiophagus venom factor from Ophiophagus hannah (King cobra).